The following is a 163-amino-acid chain: Sorting nexin-3 (163 aa).

The region spanning 39–162 (VEVRDPRTHF…VRFLQDEVFN (124 aa)) is the PX domain. A 1,2-diacyl-sn-glycero-3-phospho-(1D-myo-inositol-3-phosphate)-binding residues include Arg-82, Ser-84, Lys-113, Arg-119, and Arg-128.

It belongs to the sorting nexin family.

The protein resides in the cytoplasm. Its subcellular location is the golgi apparatus membrane. The protein localises to the prevacuolar compartment membrane. In terms of biological role, required for retention of late Golgi membrane proteins. Component of the retrieval machinery that functions by direct interaction with the cytosolic tails of certain TGN membrane proteins during the sorting/budding process at the prevacuolar compartment. Binds phosphatidylinositol 3-phosphate (PtdIns(P3)). In Eremothecium gossypii (strain ATCC 10895 / CBS 109.51 / FGSC 9923 / NRRL Y-1056) (Yeast), this protein is Sorting nexin-3 (SNX3).